An 80-amino-acid chain; its full sequence is uncharacterized protein (80 aa).

The protein belongs to the BolA/IbaG family.

This is an uncharacterized protein from Buchnera aphidicola subsp. Schizaphis graminum (strain Sg).